We begin with the raw amino-acid sequence, 339 residues long: Heat-inducible transcription repressor HrcA (339 aa).

Belongs to the HrcA family.

Functionally, negative regulator of class I heat shock genes (grpE-dnaK-dnaJ and groELS operons). Prevents heat-shock induction of these operons. This chain is Heat-inducible transcription repressor HrcA, found in Paraburkholderia phymatum (strain DSM 17167 / CIP 108236 / LMG 21445 / STM815) (Burkholderia phymatum).